Reading from the N-terminus, the 421-residue chain is MTESVLDYMSRLGRDARAASRLLARAATAQKNRALLAAADALDAARAELSHANEQDLAAGRANGLEPAMLDRLALTPARIDDMIEGLRQVATLPDPIGEIRDMRYVPSGIQIGKMRVPLGVVGIIYESRPNVTIDAASLCLKSGNATILRGGSEAIHSNQAIARCIQQGLAEAGLPAAAVQVVETTDRAAVGALISMPEYVDVIVPRGGKGLIERISREARVPVIKHLDGICHVYIDVAADLDKAIRVADNAKTQRYAPCNTMETLLVHAGIAERVLPPLAAIYREKGVELRGDAATRALLGADVLEATEEDWRTEYNAPILSIRIVDGLGAAIEHINTYGSQHTDAIITENFSDARRFLAEVDSASVMVNASTRFADGFEYGLGAEIGISTDKLHARGPVGLEGLTSEKYVVFGDGHVRT.

It belongs to the gamma-glutamyl phosphate reductase family.

The protein localises to the cytoplasm. It carries out the reaction L-glutamate 5-semialdehyde + phosphate + NADP(+) = L-glutamyl 5-phosphate + NADPH + H(+). The protein operates within amino-acid biosynthesis; L-proline biosynthesis; L-glutamate 5-semialdehyde from L-glutamate: step 2/2. Its function is as follows. Catalyzes the NADPH-dependent reduction of L-glutamate 5-phosphate into L-glutamate 5-semialdehyde and phosphate. The product spontaneously undergoes cyclization to form 1-pyrroline-5-carboxylate. The protein is Gamma-glutamyl phosphate reductase of Pseudomonas paraeruginosa (strain DSM 24068 / PA7) (Pseudomonas aeruginosa (strain PA7)).